A 336-amino-acid polypeptide reads, in one-letter code: tRNA N6-adenosine threonylcarbamoyltransferase (336 aa).

Residues H108 and H112 each coordinate Fe cation. Residues 129–133 (LISGG), D161, E178, and S258 contribute to the substrate site. Fe cation is bound at residue D286.

This sequence belongs to the KAE1 / TsaD family. Requires Fe(2+) as cofactor.

The protein localises to the cytoplasm. It carries out the reaction L-threonylcarbamoyladenylate + adenosine(37) in tRNA = N(6)-L-threonylcarbamoyladenosine(37) in tRNA + AMP + H(+). Required for the formation of a threonylcarbamoyl group on adenosine at position 37 (t(6)A37) in tRNAs that read codons beginning with adenine. Is probably involved in the transfer of the threonylcarbamoyl moiety of threonylcarbamoyl-AMP (TC-AMP) to the N6 group of A37. In Pyrobaculum neutrophilum (strain DSM 2338 / JCM 9278 / NBRC 100436 / V24Sta) (Thermoproteus neutrophilus), this protein is tRNA N6-adenosine threonylcarbamoyltransferase.